We begin with the raw amino-acid sequence, 255 residues long: MVPWLGPDDPFPSVERALGTASGAPGLLAASADLLPSRLIDAYRRGIFPWYSDGQPVLWWSPDPRMILVPAEFRISATFRKTLKRVLREPRWEIRVDCDFAGVMRACAQAPRRGQRGTWITAEIIDAYSSLHRAGDAHSIETWLDGRRVGGLYGVSFGRMFFGESMYAHASDASKIALAALVAHLREHRVEMIDCQQNTSHLASLGGREIARKTFVAHVRRAVAEPPIPWRFDKRVVAGLLGQAASATAADAFDR.

The protein belongs to the L/F-transferase family.

The protein localises to the cytoplasm. The enzyme catalyses N-terminal L-lysyl-[protein] + L-leucyl-tRNA(Leu) = N-terminal L-leucyl-L-lysyl-[protein] + tRNA(Leu) + H(+). It carries out the reaction N-terminal L-arginyl-[protein] + L-leucyl-tRNA(Leu) = N-terminal L-leucyl-L-arginyl-[protein] + tRNA(Leu) + H(+). It catalyses the reaction L-phenylalanyl-tRNA(Phe) + an N-terminal L-alpha-aminoacyl-[protein] = an N-terminal L-phenylalanyl-L-alpha-aminoacyl-[protein] + tRNA(Phe). Functionally, functions in the N-end rule pathway of protein degradation where it conjugates Leu, Phe and, less efficiently, Met from aminoacyl-tRNAs to the N-termini of proteins containing an N-terminal arginine or lysine. The polypeptide is Leucyl/phenylalanyl-tRNA--protein transferase (Burkholderia pseudomallei (strain 668)).